A 400-amino-acid chain; its full sequence is Tyrosine--tRNA ligase 2 (400 aa).

The 'HIGH' region signature appears at 46–55; that stretch reads PSAPDIHLGH. Residues 230–234 carry the 'KMSKS' region motif; it reads KMSKS. K233 contributes to the ATP binding site. Positions 339 to 399 constitute an S4 RNA-binding domain; sequence NNLIEAIVKI…GKKKIVKLLV (61 aa).

This sequence belongs to the class-I aminoacyl-tRNA synthetase family. TyrS type 2 subfamily. As to quaternary structure, homodimer.

It localises to the cytoplasm. The catalysed reaction is tRNA(Tyr) + L-tyrosine + ATP = L-tyrosyl-tRNA(Tyr) + AMP + diphosphate + H(+). Catalyzes the attachment of tyrosine to tRNA(Tyr) in a two-step reaction: tyrosine is first activated by ATP to form Tyr-AMP and then transferred to the acceptor end of tRNA(Tyr). The sequence is that of Tyrosine--tRNA ligase 2 from Clostridium acetobutylicum (strain ATCC 824 / DSM 792 / JCM 1419 / IAM 19013 / LMG 5710 / NBRC 13948 / NRRL B-527 / VKM B-1787 / 2291 / W).